The following is a 189-amino-acid chain: Small ribosomal subunit protein uS5 (189 aa).

In terms of domain architecture, S5 DRBM spans 22–85 (LIDKLVTINR…ERAKRGMIRV (64 aa)). Residues 164–189 (SVASRRGKKVADLFGPKREKEAPADV) are disordered. Positions 172-189 (KVADLFGPKREKEAPADV) are enriched in basic and acidic residues.

This sequence belongs to the universal ribosomal protein uS5 family. As to quaternary structure, part of the 30S ribosomal subunit. Contacts proteins S4 and S8.

With S4 and S12 plays an important role in translational accuracy. Functionally, located at the back of the 30S subunit body where it stabilizes the conformation of the head with respect to the body. The polypeptide is Small ribosomal subunit protein uS5 (Acidiphilium cryptum (strain JF-5)).